Consider the following 326-residue polypeptide: MSKIQVNNIEALNNAMDLALERDQNVVLYGQDAGFEGGVFRATKGLQQKYGSERVWDCPIAENSMAGIGVGAAIGGLKPIVEIQFSGFSFPAMFQIFVHAARIRNRSRGVYTAPLVVRMPMGGGIKALEHHSETLEAIYAQIAGLKTVMPSNPYDTKGLFLAAIESPDPVIFFEPKKLYRAFRQEIPSDYYTVPIGEANLISEGSELTIVSYGPTMFDLINLVYSGELKDKGIELIDLRTISPWDKQTVFNSVKKTGRLLVVTEAVKSFTTSAEIITSVTEELFTYLKKAPQRVTGFDIVVPLARGEKYQFEINARVIDAVNQLLK.

E62 provides a ligand contact to thiamine diphosphate.

Heterodimer of an alpha and a beta chain. It depends on thiamine diphosphate as a cofactor.

The enzyme catalyses N(6)-[(R)-lipoyl]-L-lysyl-[protein] + pyruvate + H(+) = N(6)-[(R)-S(8)-acetyldihydrolipoyl]-L-lysyl-[protein] + CO2. In terms of biological role, the pyruvate dehydrogenase complex catalyzes the overall conversion of pyruvate to acetyl-CoA and CO(2). It contains multiple copies of three enzymatic components: pyruvate dehydrogenase (E1), dihydrolipoamide acetyltransferase (E2) and lipoamide dehydrogenase (E3). This chain is Pyruvate dehydrogenase E1 component subunit beta (pdhB), found in Mycoplasma genitalium (strain ATCC 33530 / DSM 19775 / NCTC 10195 / G37) (Mycoplasmoides genitalium).